The chain runs to 169 residues: Caltractin (169 aa).

The interval 1-24 is disordered; sequence MSYRKTVVSARRDQKKGRVGGLTE. EF-hand domains follow at residues 25-60, 61-96, 98-133, and 134-169; these read EQKQ…LGFE, PKKE…KMGE, DSRE…LGEN, and LTDE…TSLF. Residues aspartate 38, aspartate 40, serine 42, threonine 44, and glutamate 49 each contribute to the Ca(2+) site. Ca(2+) is bound by residues aspartate 147, asparagine 149, aspartate 151, glutamine 153, and glutamate 158.

It belongs to the centrin family.

In terms of biological role, this calcium-binding protein is found in the basal body complexes (the functional homolog of the centrosome in animal cell). In mitotic cells it is specifically associated with the poles of the mitotic spindles at the sites of the duplicated basal body complexes. The protein is Caltractin of Dunaliella salina (Green alga).